Here is a 242-residue protein sequence, read N- to C-terminus: Ribonuclease 3 (242 aa).

The RNase III domain maps to Leu-14–Gly-142. Residue Glu-56 participates in Mg(2+) binding. Asp-60 is a catalytic residue. Residues Asp-128 and Glu-131 each contribute to the Mg(2+) site. Residue Glu-131 is part of the active site. Positions Asn-170–Ser-235 constitute a DRBM domain.

This sequence belongs to the ribonuclease III family. As to quaternary structure, homodimer. It depends on Mg(2+) as a cofactor.

It localises to the cytoplasm. It catalyses the reaction Endonucleolytic cleavage to 5'-phosphomonoester.. Its function is as follows. Digests double-stranded RNA. Involved in the processing of primary rRNA transcript to yield the immediate precursors to the large and small rRNAs (23S and 16S). Processes some mRNAs, and tRNAs when they are encoded in the rRNA operon. Processes pre-crRNA and tracrRNA of type II CRISPR loci if present in the organism. The polypeptide is Ribonuclease 3 (Gloeobacter violaceus (strain ATCC 29082 / PCC 7421)).